A 231-amino-acid chain; its full sequence is Ureidoacrylate amidohydrolase RutB (231 aa).

D25 serves as the catalytic Proton acceptor. K134 is a catalytic residue. The active-site Nucleophile is the C167.

It belongs to the isochorismatase family. RutB subfamily.

It catalyses the reaction (Z)-3-ureidoacrylate + H2O + H(+) = (Z)-3-aminoacrylate + NH4(+) + CO2. The catalysed reaction is (Z)-3-ureidoacrylate + H2O = (Z)-3-aminoacrylate + carbamate + H(+). The enzyme catalyses (Z)-2-methylureidoacrylate + H2O + H(+) = (Z)-2-methylaminoacrylate + NH4(+) + CO2. Hydrolyzes ureidoacrylate to form aminoacrylate and carbamate. The carbamate hydrolyzes spontaneously, thereby releasing one of the nitrogen atoms of the pyrimidine ring as ammonia and one of its carbon atoms as CO2. The chain is Ureidoacrylate amidohydrolase RutB from Escherichia coli O9:H4 (strain HS).